The sequence spans 478 residues: Zinc finger protein 410 (478 aa).

The segment at 187–213 (NAKTSSNGENVHLGSGDGQSKDSGPLP) is disordered. 5 C2H2-type zinc fingers span residues 219–243 (LKCTVEGCDRTFVWPAHFKYHLKTH), 249–273 (FICPAEGCGKSFYVLQRLKVHMRTH), 279–303 (FMCHESGCGKQFTTAGNLKNHRRIH), 309–333 (FLCEAQGCGRSFAEYSSLRKHLVVH), and 339–362 (HQCQVCGKTFSQSGSRNVHMRKHH). Residues Cys-221, Cys-226, His-239, His-243, Cys-251, Cys-256, His-269, His-273, Cys-281, Cys-286, His-299, His-303, Cys-311, Cys-316, His-329, His-333, Cys-341, Cys-344, His-357, and His-361 each contribute to the Zn(2+) site.

As to quaternary structure, interacts with CDKN2A/p14ARF. Sumoylated. Sumoylation increases its half-life, possibly by blocking ubiquitin-mediated degradation. In terms of processing, O-glycosylated. O-GlcNAcylation may occur in response to increasing glucose levels and affect transcription factor activity. In terms of tissue distribution, widely expressed.

It localises to the nucleus. The protein localises to the chromosome. Its function is as follows. Transcription factor that binds to the sequence motif 5'-CATCCCATAATA-3', and is specifically required to silence expression of fetal hemoglobin in adult erythroid cells. Prevents expression of fetal hemoglobin genes HBG1 and HBG2 through CHD4: acts as a direct transcriptional activator of CHD4, a central component of the NuRD complex that represses transcription of fetal hemoglobin genes HBG1 and HBG2 in erythroid cells. May also activate transcription of matrix-remodeling genes such as MMP1 during fibroblast senescence. May activate transcription of the gap junction gene GJC1, perhaps in response to increasing glucose. However, recent studies suggest that ZNF410 is dedicated to regulate expression of a single gene: CHD4. This is Zinc finger protein 410 from Homo sapiens (Human).